A 367-amino-acid polypeptide reads, in one-letter code: Flagellar P-ring protein (367 aa).

The N-terminal stretch at 1 to 22 is a signal peptide; that stretch reads MRRMLVIRWILAIHLIATQVFA.

It belongs to the FlgI family. As to quaternary structure, the basal body constitutes a major portion of the flagellar organelle and consists of four rings (L,P,S, and M) mounted on a central rod.

Its subcellular location is the periplasm. It is found in the bacterial flagellum basal body. Assembles around the rod to form the L-ring and probably protects the motor/basal body from shearing forces during rotation. The chain is Flagellar P-ring protein from Legionella pneumophila (strain Lens).